Here is a 1288-residue protein sequence, read N- to C-terminus: (E3-independent) E2 ubiquitin-conjugating enzyme UBE2O (1288 aa).

Composition is skewed to low complexity over residues 1–26 (MADP…APAA) and 34–47 (ATDS…DSGP). 2 disordered regions span residues 1–51 (MADP…EAGS) and 80–109 (EDSD…EGRA). Ser-45, Ser-82, Ser-84, and Ser-394 each carry phosphoserine. Disordered regions lie at residues 396 to 529 (TPDT…KNKV) and 711 to 743 (ESDY…NGLV). The span at 401–418 (CPRDHSMEDPDKKGEARA) shows a compositional bias: basic and acidic residues. Ser-436 is subject to Phosphoserine. A compositionally biased stretch (acidic residues) spans 440 to 450 (MQDEGSEELQE). The span at 462-472 (EGGDDGLHSAE) shows a compositional bias: basic and acidic residues. Acidic residues predominate over residues 473–485 (QDADDEAADDTDD). Phosphothreonine occurs at positions 483 and 486. Over residues 486 to 502 (TSSVTSSASSTTSSQSG) the composition is skewed to low complexity. Ser-510 bears the Phosphoserine mark. Positions 517-528 (NLKRKHKRKKNK) are enriched in basic residues. Over residues 717 to 726 (VEGSSSGASS) the composition is skewed to low complexity. Positions 727–737 (DEWEDDSDSWE) are enriched in acidic residues. Positions 809 to 879 (RELKEAIKIL…IAEEEKMEAV (71 aa)) form a coiled coil. Residue Ser-833 is modified to Phosphoserine. A Phosphothreonine modification is found at Thr-835. At Ser-836 the chain carries Phosphoserine. A compositionally biased stretch (basic and acidic residues) spans 872-890 (EEEKMEAVPDTERKEEKPE). Residues 872–899 (EEEKMEAVPDTERKEEKPEVQSPVKAEW) form a disordered region. Ser-893 carries the post-translational modification Phosphoserine. The region spanning 950-1110 (KFFSTVRKEM…ALIRVVQSMT (161 aa)) is the UBC core domain. Cys-1037 acts as the Glycyl thioester intermediate in catalysis. The disordered stretch occupies residues 1158–1247 (GALKDSSSLE…RSFLPEKSGY (90 aa)).

This sequence belongs to the ubiquitin-conjugating enzyme family. In terms of assembly, interacts with CPNE1 (via VWFA domain) and CPNE4 (via VWFA domain). Interacts with UBR2. Post-translationally, phosphorylated. Phosphorylation affects subcellular location. Ubiquitinated: autoubiquitinates, possibly affecting its subcellular location. As to expression, highly expressed in reticulocytes.

It is found in the cytoplasm. The protein resides in the nucleus. It catalyses the reaction S-ubiquitinyl-[E1 ubiquitin-activating enzyme]-L-cysteine + [acceptor protein]-L-lysine = [E1 ubiquitin-activating enzyme]-L-cysteine + N(6)-monoubiquitinyl-[acceptor protein]-L-lysine.. Its pathway is protein modification; protein ubiquitination. Its activity is regulated as follows. Inhibited by inorganic arsenite such as phenylarsenoxides. In terms of biological role, E2/E3 hybrid ubiquitin-protein ligase that displays both E2 and E3 ligase activities and mediates monoubiquitination of target proteins. Negatively regulates TRAF6-mediated NF-kappa-B activation independently of its E2 activity. Acts as a positive regulator of BMP7 signaling by mediating monoubiquitination of SMAD6, thereby regulating adipogenesis. Mediates monoubiquitination at different sites of the nuclear localization signal (NLS) of BAP1, leading to cytoplasmic retention of BAP1. Also able to monoubiquitinate the NLS of other chromatin-associated proteins, such as INO80 and CXXC1, affecting their subcellular location. Acts as a regulator of retrograde transport by assisting the TRIM27:MAGEL2 E3 ubiquitin ligase complex to mediate 'Lys-63'-linked ubiquitination of WASHC1, leading to promote endosomal F-actin assembly. In Mus musculus (Mouse), this protein is (E3-independent) E2 ubiquitin-conjugating enzyme UBE2O (Ube2o).